Reading from the N-terminus, the 451-residue chain is Potassium/sodium uptake protein NtpJ (451 aa).

Transmembrane regions (helical) follow at residues 18–38, 46–66, 78–98, 133–153, 162–182, 192–212, 230–250, 293–313, 350–370, 380–400, and 410–430; these read IAAGFFILILFGGSLLTLPFF, HFIDALFTATSAVCVTGLTTL, FLIMTLIEIGGLGFMMIPILF, ILKFAVVIQVIGAVALSVVFI, IWFSIFHAVSSFCNAGFDLLG, VYLIMVVSALIIAGGLGFIVW, VALSVTALLLIGGFILFLITE, LILTMFLMYIGGTSGSTAGGL, ALTLFFVTLSLCVVAIMVLSV, IEYIAFEVFSAFGTVGLTMGL, and LVIISLMYIGRVGIMTVVFSL.

The protein belongs to the TrkH potassium transport family.

The protein localises to the cell membrane. Its function is as follows. Mediates electrogenic transport of potassium as well as sodium. Acts probably as a potassium-sodium cotransporter. Major sodium reentry pathway at high pH values. The polypeptide is Potassium/sodium uptake protein NtpJ (ntpJ) (Enterococcus hirae (strain ATCC 9790 / DSM 20160 / JCM 8729 / LMG 6399 / NBRC 3181 / NCIMB 6459 / NCDO 1258 / NCTC 12367 / WDCM 00089 / R)).